The primary structure comprises 359 residues: Mannose-1-phosphate guanylyltransferase catalytic subunit beta (359 aa).

Residues Lys-2 to Pro-221 are substrate-binding domain. Asp-109 lines the GDP-alpha-D-mannose pocket. Asp-109 is a Mg(2+) binding site. Lys-161 is a catalytic residue. Asp-217 contributes to the GDP-alpha-D-mannose binding site. Asp-217 is a Mg(2+) binding site. Residues Ala-244 to Met-359 form a hexapeptide repeat domain region.

This sequence belongs to the transferase hexapeptide repeat family. Component of the GMPPA-GMPPB mannose-1-phosphate guanylyltransferase complex composed of 4 GMPPA subunits and 8 gmppB subunits; the complex is organized into three layers, a central layer made up of 2 gmppA dimers sandwiched between two layers each made up of 2 gmppB dimers. gmppB catalytic activity is reduced when part of the complex and binding of GDP-alpha-D-Mannose by gmppA induces allosteric feedback inhibition of gmppB. Mg(2+) is required as a cofactor.

It carries out the reaction alpha-D-mannose 1-phosphate + GTP + H(+) = GDP-alpha-D-mannose + diphosphate. The protein operates within nucleotide-sugar biosynthesis; GDP-alpha-D-mannose biosynthesis; GDP-alpha-D-mannose from alpha-D-mannose 1-phosphate (GTP route): step 1/1. With respect to regulation, enzyme activity is reduced by incorporation into the GMPPA-GMPPB mannose-1-phosphate guanylyltransferase complex. Allosterically inhibited, when part of the GMPPA-GMPPB complex, by GDP-alpha-D-mannose binding to GMPPA. Functionally, catalytic subunit of the GMPPA-GMPPB mannose-1-phosphate guanylyltransferase complex. Catalyzes the formation of GDP-mannose, an essential precursor of glycan moieties of glycoproteins and glycolipids. Can catalyze the reverse reaction in vitro. Together with GMPPA regulates GDP-alpha-D-mannose levels. The polypeptide is Mannose-1-phosphate guanylyltransferase catalytic subunit beta (gmppB) (Dictyostelium discoideum (Social amoeba)).